The following is a 349-amino-acid chain: S-adenosylmethionine decarboxylase proenzyme 3 (349 aa).

Residues Glu-9 and Glu-12 contribute to the active site. Residue Glu-68 participates in substrate binding. The Schiff-base intermediate with substrate; via pyruvic acid role is filled by Ser-69. Ser-69 bears the Pyruvic acid (Ser); by autocatalysis mark. Catalysis depends on Cys-83, which acts as the Proton donor; for catalytic activity. Residues Ser-235 and His-248 each act as proton acceptor; for processing activity in the active site. Glu-252 is a binding site for substrate.

It belongs to the eukaryotic AdoMetDC family. Requires pyruvate as cofactor. Post-translationally, is synthesized initially as an inactive proenzyme. Formation of the active enzyme involves a self-maturation process in which the active site pyruvoyl group is generated from an internal serine residue via an autocatalytic post-translational modification. Two non-identical subunits are generated from the proenzyme in this reaction, and the pyruvate is formed at the N-terminus of the alpha chain, which is derived from the carboxyl end of the proenzyme. The post-translation cleavage follows an unusual pathway, termed non-hydrolytic serinolysis, in which the side chain hydroxyl group of the serine supplies its oxygen atom to form the C-terminus of the beta chain, while the remainder of the serine residue undergoes an oxidative deamination to produce ammonia and the pyruvoyl group blocking the N-terminus of the alpha chain.

It carries out the reaction S-adenosyl-L-methionine + H(+) = S-adenosyl 3-(methylsulfanyl)propylamine + CO2. It participates in amine and polyamine biosynthesis; S-adenosylmethioninamine biosynthesis; S-adenosylmethioninamine from S-adenosyl-L-methionine: step 1/1. Essential for biosynthesis of the polyamines spermidine and spermine. Essential for polyamine homeostasis, and normal plant embryogenesis, growth and development. The polypeptide is S-adenosylmethionine decarboxylase proenzyme 3 (Arabidopsis thaliana (Mouse-ear cress)).